A 162-amino-acid polypeptide reads, in one-letter code: Troponin C, skeletal muscle (162 aa).

N-acetylalanine is present on Ala-1. EF-hand domains lie at 17-52 (EMIA…LGQT), 53-88 (PTKE…QMKE), 93-128 (KSEE…SGES), and 129-162 (ITDE…EGVQ). Positions 30, 32, 36, 41, 66, 68, 70, 72, 77, 106, 108, 110, 112, 117, 142, 144, 146, 148, and 153 each coordinate Ca(2+).

It belongs to the troponin C family.

Troponin is the central regulatory protein of striated muscle contraction. Tn consists of three components: Tn-I which is the inhibitor of actomyosin ATPase, Tn-T which contains the binding site for tropomyosin and Tn-C. The binding of calcium to Tn-C abolishes the inhibitory action of Tn on actin filaments. The polypeptide is Troponin C, skeletal muscle (Pelophylax lessonae (Pool frog)).